The primary structure comprises 430 residues: Histidine--tRNA ligase (430 aa).

It belongs to the class-II aminoacyl-tRNA synthetase family. In terms of assembly, homodimer.

The protein localises to the cytoplasm. The catalysed reaction is tRNA(His) + L-histidine + ATP = L-histidyl-tRNA(His) + AMP + diphosphate + H(+). The sequence is that of Histidine--tRNA ligase from Acinetobacter baylyi (strain ATCC 33305 / BD413 / ADP1).